We begin with the raw amino-acid sequence, 139 residues long: MRTLWIMAVLLLGVEGHLMQFETLIMKIAGRSGVWWYGSYGCYCGAGGQGRPQDPSDRCCFVHDCCYGKVTGCNTKDEFYTYSEENGAITCGGENPCLKEVCECDLAAAICFRDNLDTYNSKKYWMFPAKNCLEESEPC.

The N-terminal stretch at 1–16 (MRTLWIMAVLLLGVEG) is a signal peptide. Intrachain disulfides connect cysteine 42-cysteine 132, cysteine 44-cysteine 60, cysteine 59-cysteine 111, cysteine 65-cysteine 139, cysteine 66-cysteine 104, cysteine 73-cysteine 97, and cysteine 91-cysteine 102. Residues tyrosine 43, glycine 45, and glycine 47 each contribute to the Ca(2+) site. The active site involves histidine 63. Aspartate 64 provides a ligand contact to Ca(2+). Residue aspartate 105 is part of the active site.

The cofactor is Ca(2+). Expressed by the venom gland.

The protein localises to the secreted. The catalysed reaction is a 1,2-diacyl-sn-glycero-3-phosphocholine + H2O = a 1-acyl-sn-glycero-3-phosphocholine + a fatty acid + H(+). Its function is as follows. Snake venom phospholipase A2 (PLA2) that inhibits the ADP- and collagen-induced human platelet aggregation. Exhibits high hydrolytic activities and preferred the anionic micelles to the zwitterionic micelles. PLA2 catalyzes the calcium-dependent hydrolysis of the 2-acyl groups in 3-sn-phosphoglycerides. The sequence is that of Acidic phospholipase A2 DE-I from Ovophis okinavensis (Ryukyu Island pit viper).